Reading from the N-terminus, the 770-residue chain is Amyloid-beta precursor protein (770 aa).

Positions 1 to 17 are cleaved as a signal peptide; it reads MLPSLALLLLAAWTVRA. Over 18–701 the chain is Extracellular; sequence LEVPTDGNAG…AEDVGSNKGA (684 aa). Residues 28–123 are GFLD subdomain; sequence LLAEPQIAMF…PYRCLVGEFV (96 aa). An E1 domain is found at 28–189; sequence LLAEPQIAMF…RGVEFVCCPL (162 aa). Intrachain disulfides connect Cys38/Cys62, Cys73/Cys117, Cys98/Cys105, Cys133/Cys187, Cys144/Cys174, and Cys158/Cys186. Residue 96–110 coordinates heparin; it reads NWCKRGRKQCKTHTH. The segment at 131–189 is cuBD subdomain; that stretch reads DKCKFLHQERMDVCETHLHWHTVAKETCSEKSTNLHDYGMLLPCGIDKFRGVEFVCCPL. Cu(2+) is bound by residues His147, His151, and Tyr168. The tract at residues 181–188 is zinc-binding; that stretch reads GVEFVCCP. Zn(2+) is bound by residues Glu183, Cys186, and Cys187. A compositionally biased stretch (acidic residues) spans 193–207; it reads SDSVDSADAEEDDSD. Residues 193–284 form a disordered region; the sequence is SDSVDSADAE…TTTTTTESVE (92 aa). Position 198 is a phosphoserine; by CK2 (Ser198). Ser206 is modified (phosphoserine; by CK1). Sulfotyrosine is present on residues Tyr217 and Tyr262. A compositionally biased stretch (acidic residues) spans 228–264; sequence VAEEEEVADVEEEEADDDEDVEDGDEVEEEAEEPYEE. The segment covering 268–281 has biased composition (low complexity); it reads RTTSTATTTTTTTE. 3 disulfide bridges follow: Cys291–Cys341, Cys300–Cys324, and Cys316–Cys337. The region spanning 291-341 is the BPTI/Kunitz inhibitor domain; sequence CSEQAETGPCRAMISRWYFDVTEGKCVPFFYGGCGGNRNNFDTEEYCMAVC. At Tyr336 the chain carries Sulfotyrosine. Positions 344-365 match the OX-2 motif; the sequence is VSTQSLLKTTSEPLPQDPDKLP. An E2 domain is found at 374 to 565; the sequence is AVDKYLETPG…EEIQDEVDEL (192 aa). A heparin-binding region spans residues 391–423; the sequence is FQKAKERLEAKHRERMSQVMREWEEAERQAKNL. At Ser441 the chain carries Phosphoserine. The interval 491–522 is heparin-binding; the sequence is FNMLKKYVRAEQKDRQHTLKHFEHVRMVDPKK. Phosphotyrosine is present on Tyr497. Residues 523 to 540 form a collagen-binding region; the sequence is AAQIRSQVMTHLRVIYER. 2 N-linked (GlcNAc...) asparagine glycosylation sites follow: Asn542 and Asn571. Cu(2+)-binding residues include His677 and His685. Zn(2+) contacts are provided by His677 and His685. The interaction with PSEN1 stretch occupies residues 695–722; the sequence is VGSNKGAIIGLMVGGVVIATVIVITLVM. Residues 702–722 form a helical membrane-spanning segment; the sequence is IIGLMVGGVVIATVIVITLVM. The Cytoplasmic segment spans residues 723–770; sequence LKKKQYTSIHHGVVEVDAAVTPEERHLSKMQQNGYENPTYKFFEQMQN. A Basolateral sorting signal motif is present at residues 724 to 734; sequence KKKQYTSIHHG. A Phosphothreonine modification is found at Thr729. Ser730 is modified (phosphoserine; by APP-kinase I). The interval 732–751 is interaction with G(o)-alpha; the sequence is HHGVVEVDAAVTPEERHLSK. Thr743 carries the phosphothreonine; by CDK5 and MAPK10 and LRRK2 modification. Positions 756–770 are interaction with DAB2; sequence GYENPTYKFFEQMQN. A required for the interaction with KIF5B and for anterograde transport in axons region spans residues 756–770; that stretch reads GYENPTYKFFEQMQN. Tyr757 bears the Phosphotyrosine; by ABL1 mark. The short motif at 757-762 is the YENPXY motif; contains endocytosis signal element; it reads YENPTY. Lys763 is covalently cross-linked (Glycyl lysine isopeptide (Lys-Gly) (interchain with G-Cter in ubiquitin)).

This sequence belongs to the APP family. As to quaternary structure, binds, via its C-terminus, to the PID domain of several cytoplasmic proteins, including APBB family members, the APBA family, MAPK8IP1, SHC1, NUMB and DAB1. Binding to DAB1 inhibits its serine phosphorylation. Interacts (via NPXY motif) with DAB2 (via PID domain); the interaction is impaired by tyrosine phosphorylation of the NPXY motif. Also interacts with GPCR-like protein BPP, APPBP1, IB1, KNS2 (via its TPR domains), APPBP2 (via BaSS) and DDB1. In vitro, it binds MAPT via the MT-binding domains. Associates with microtubules in the presence of ATP and in a kinesin-dependent manner. Interacts, through a C-terminal domain, with GNAO1. Amyloid-beta protein 42 binds CHRNA7 in hippocampal neurons. Amyloid-beta associates with HADH2. Interacts with ANKS1B and AGER. Interacts with CPEB1. Interacts with ITM2B. Interacts with ITM2C. Interacts with IDE. Can form homodimers; dimerization is enhanced in the presence of Cu(2+) ions. Can form homodimers; this is promoted by heparin binding. Amyloid-beta protein 40 interacts with S100A9. CTF-alpha product of APP interacts with GSAP. Isoform APP695 interacts with SORL1 (via N-terminal ectodomain); this interaction retains APP in the trans-Golgi network and reduces processing into soluble APP-alpha and amyloid-beta peptides. The C99 fragment also interacts with SORL1. Isoform APP751 interacts with SORL1. Isoform APP770 interacts with SORL1. Interacts with PLD3. Interacts with VDAC1. Interacts with NSG1; could regulate APP processing. Amyloid-beta protein 42 interacts with FPR2. Interacts with SYT7. Interacts (via transmembrane region) with PSEN1; the interaction is direct. Interacts with LRRK2. Interacts (via cytoplasmic domain) with KIF5B. Interacts (via C-terminus) with APBB2/FE65L1 (via C-terminus). Interacts (via intracellular domain) with APBB3. Post-translationally, proteolytically processed under normal cellular conditions. Cleavage either by alpha-secretase, beta-secretase or theta-secretase leads to generation and extracellular release of soluble APP peptides, S-APP-alpha and S-APP-beta, and the retention of corresponding membrane-anchored C-terminal fragments, C80, C83 and C99. Subsequent processing of C80 and C83 by gamma-secretase yields P3 peptides. This is the major secretory pathway and is non-amyloidogenic. Alternatively, presenilin/nicastrin-mediated gamma-secretase processing of C99 releases the amyloid-beta proteins, amyloid-beta protein 40 and amyloid-beta protein 42, major components of amyloid plaques, and the cytotoxic C-terminal fragments, gamma-CTF(50), gamma-CTF(57) and gamma-CTF(59). PSEN1 cleavage is more efficient with C83 than with C99 as substrate (in vitro). Amyloid-beta protein 40 and Amyloid-beta protein 42 are cleaved by ACE. Many other minor amyloid-beta peptides, amyloid-beta 1-X peptides, are found in cerebral spinal fluid (CSF) including the amyloid-beta X-15 peptides, produced from the cleavage by alpha-secretase. In terms of processing, proteolytically cleaved by caspases during neuronal apoptosis. Cleavage at Asp-739 by either CASP6, CASP8 or CASP9 results in the production of the neurotoxic C31 peptide and the increased production of amyloid-beta peptides. N- and O-glycosylated. Post-translationally, phosphorylation in the C-terminal on tyrosine, threonine and serine residues is neuron-specific. Phosphorylation can affect APP processing, neuronal differentiation and interaction with other proteins. Phosphorylated on Thr-743 in neuronal cells by Cdc5 kinase and Mapk10, in dividing cells by Cdc2 kinase in a cell-cycle dependent manner with maximal levels at the G2/M phase and, in vitro, by GSK-3-beta. The Thr-743 phosphorylated form causes a conformational change which reduces binding of Fe65 family members. In dopaminergic (DA) neurons, phosphorylation on Thr-743 by LRKK2 promotes the production and the nuclear translocation of the APP intracellular domain (AICD) which induces DA neuron apoptosis. Phosphorylation on Tyr-757 is required for SHC binding. Phosphorylated in the extracellular domain by casein kinases on both soluble and membrane-bound APP. This phosphorylation is inhibited by heparin. In terms of processing, extracellular binding and reduction of copper, results in a corresponding oxidation of Cys-144 and Cys-158, and the formation of a disulfide bond. Trophic-factor deprivation triggers the cleavage of surface APP by beta-secretase to release sAPP-beta which is further cleaved to release an N-terminal fragment of APP (N-APP). Post-translationally, amyloid-beta peptides are degraded by IDE. In terms of processing, sulfated on tyrosine residues. In terms of tissue distribution, expressed in the brain with expression in cortex, cerebellum, hippocampus, olfactory bulb, neurons, astrocytes and microglia (at protein level). Expressed in the retinal lens. Expressed at a low level in muscle cells (at protein level). As to expression, expressed in kidney. Widely expressed. Expressed in several different brain regions including hippocampus, substantia nigra pars compacta and cerebellum. Within the cerebellum, abundantly expressed in Purkinje cells. In terms of tissue distribution, expressed in the brain, kidney and liver. Expressed in several different brain regions including hippocampus, substantia nigra pars compacta and cerebellum. Within the cerebellum, abundantly expressed in Purkinje cells. As to expression, expressed in several different brain regions including hippocampus, substantia nigra pars compacta and cerebellum. Within the cerebellum, abundantly expressed in Purkinje cells.

Its subcellular location is the cell membrane. The protein localises to the membrane. The protein resides in the perikaryon. It localises to the cell projection. It is found in the growth cone. Its subcellular location is the clathrin-coated pit. The protein localises to the early endosome. The protein resides in the cytoplasmic vesicle. It localises to the golgi apparatus. It is found in the trans-Golgi network. Its subcellular location is the endoplasmic reticulum. The protein localises to the secreted. The protein resides in the cell surface. It localises to the nucleus. It is found in the cytoplasm. In terms of biological role, functions as a cell surface receptor and performs physiological functions on the surface of neurons relevant to neurite growth, neuronal adhesion and axonogenesis. Interaction between APP molecules on neighboring cells promotes synaptogenesis. Involved in cell mobility and transcription regulation through protein-protein interactions. Can promote transcription activation through binding to APBB1-KAT5 and inhibit Notch signaling through interaction with Numb. Couples to apoptosis-inducing pathways such as those mediated by G(o) and JIP. Inhibits G(o)-alpha ATPase activity. Acts as a kinesin I membrane receptor, mediating the axonal transport of beta-secretase and presenilin 1. By acting as a kinesin I membrane receptor, plays a role in axonal anterograde transport of cargo towards synapses in axons. May be involved in copper homeostasis/oxidative stress through copper ion reduction. Can regulate neurite outgrowth through binding to components of the extracellular matrix such as heparin and collagen I and IV. The splice isoforms that contain the BPTI domain possess protease inhibitor activity. Induces a AGER-dependent pathway that involves activation of p38 MAPK, resulting in internalization of amyloid-beta peptide and leading to mitochondrial dysfunction in cultured cortical neurons. Provides Cu(2+) ions for GPC1 which are required for release of nitric oxide (NO) and subsequent degradation of the heparan sulfate chains on GPC1. Its function is as follows. Amyloid-beta peptides are lipophilic metal chelators with metal-reducing activity. Binds transient metals such as copper, zinc and iron. Rat and mouse amyloid-beta peptides bind only weakly transient metals and have little reducing activity due to substitutions of transient metal chelating residues. Amyloid-beta protein 42 may activate mononuclear phagocytes in the brain and elicit inflammatory responses. Promotes both tau aggregation and TPK II-mediated phosphorylation. Also binds GPC1 in lipid rafts. The gamma-CTF peptides as well as the caspase-cleaved peptides, including C31, are potent enhancers of neuronal apoptosis. The protein is Amyloid-beta precursor protein of Mus musculus (Mouse).